A 192-amino-acid chain; its full sequence is Ubiquitin-conjugating enzyme E2 27 (192 aa).

Residues 2–150 enclose the UBC core domain; sequence IDFSRIQKEL…ARYWTETFAK (149 aa). Catalysis depends on cysteine 88, which acts as the Glycyl thioester intermediate. Residues 153–192 enclose the UBA domain; the sequence is SLEEKVKRLVEMGFGDAQVRSAIESSGGDENLALEKLCSA.

It belongs to the ubiquitin-conjugating enzyme family. Expressed in seeds, pistils, siliques, hypocotyls and leaves.

The catalysed reaction is S-ubiquitinyl-[E1 ubiquitin-activating enzyme]-L-cysteine + [E2 ubiquitin-conjugating enzyme]-L-cysteine = [E1 ubiquitin-activating enzyme]-L-cysteine + S-ubiquitinyl-[E2 ubiquitin-conjugating enzyme]-L-cysteine.. It participates in protein modification; protein ubiquitination. In terms of biological role, accepts the ubiquitin from the E1 complex and catalyzes its covalent attachment to other proteins. The protein is Ubiquitin-conjugating enzyme E2 27 (UBC27) of Arabidopsis thaliana (Mouse-ear cress).